Consider the following 189-residue polypeptide: Elongation factor P (189 aa).

K34 carries the N6-(3,6-diaminohexanoyl)-5-hydroxylysine modification.

Belongs to the elongation factor P family. May be beta-lysylated on the epsilon-amino group of Lys-34 by the combined action of EpmA and EpmB, and then hydroxylated on the C5 position of the same residue by EpmC (if this protein is present). Lysylation is critical for the stimulatory effect of EF-P on peptide-bond formation. The lysylation moiety may extend toward the peptidyltransferase center and stabilize the terminal 3-CCA end of the tRNA. Hydroxylation of the C5 position on Lys-34 may allow additional potential stabilizing hydrogen-bond interactions with the P-tRNA.

It localises to the cytoplasm. The protein operates within protein biosynthesis; polypeptide chain elongation. Its function is as follows. Involved in peptide bond synthesis. Alleviates ribosome stalling that occurs when 3 or more consecutive Pro residues or the sequence PPG is present in a protein, possibly by augmenting the peptidyl transferase activity of the ribosome. Modification of Lys-34 is required for alleviation. In Saccharophagus degradans (strain 2-40 / ATCC 43961 / DSM 17024), this protein is Elongation factor P.